Consider the following 182-residue polypeptide: ATP-dependent protease subunit HslV (182 aa).

Threonine 10 is a catalytic residue. Na(+) is bound by residues alanine 166, cysteine 169, and serine 172.

It belongs to the peptidase T1B family. HslV subfamily. In terms of assembly, a double ring-shaped homohexamer of HslV is capped on each side by a ring-shaped HslU homohexamer. The assembly of the HslU/HslV complex is dependent on binding of ATP.

It localises to the cytoplasm. The enzyme catalyses ATP-dependent cleavage of peptide bonds with broad specificity.. Its activity is regulated as follows. Allosterically activated by HslU binding. Protease subunit of a proteasome-like degradation complex believed to be a general protein degrading machinery. This Rickettsia peacockii (strain Rustic) protein is ATP-dependent protease subunit HslV.